The primary structure comprises 858 residues: Polyhomeotic-like protein 2 (858 aa).

Disordered stretches follow at residues 1–76 (MENE…QYLQ), 230–307 (QQTP…MEGR), 337–388 (PQPS…VALQ), 407–444 (LQCP…PHTP), 473–493 (KEVA…SPHQ), and 529–561 (TDLS…KPPQ). Low complexity-rich tracts occupy residues 10–34 (TSSS…NSSS) and 230–241 (QQTPAAAASGPT). Residues 33-53 (SSGGSGRPTGPQISVYSGIPD) are interaction with BMI1. Positions 265 to 274 (PAQSRNTAQA) are enriched in polar residues. A compositionally biased stretch (low complexity) spans 337 to 358 (PQPSSKHLQPQFVIQQQPQPQQ). The segment covering 379–388 (ASVSPSVALQ) has biased composition (polar residues). Over residues 473–483 (KEVAPGEKSVP) the composition is skewed to basic and acidic residues. Positions 537–551 (TSGNGNSASSIAGTA) are enriched in low complexity. An HD1 motif is present at residues 558 to 587 (KPPQAIVKPQILTHVIEGFVIQEGAEPFPV). Glycyl lysine isopeptide (Lys-Gly) (interchain with G-Cter in SUMO2) cross-links involve residues K598 and K600. The residue at position 619 (T619) is a Phosphothreonine. S621 carries the post-translational modification Phosphoserine. K632 is covalently cross-linked (Glycyl lysine isopeptide (Lys-Gly) (interchain with G-Cter in SUMO2)). Residues 633–667 (EEGAPLKLKCELCGRVDFAYKFKRSKRFCSMACAK) form an FCS-type zinc finger. Residues C642, C645, C661, and C665 each coordinate Zn(2+). 2 disordered regions span residues 688 to 720 (QKAG…TGTV) and 732 to 768 (HSQE…GQRD). A Glycyl lysine isopeptide (Lys-Gly) (interchain with G-Cter in SUMO2) cross-link involves residue K702. Residue S751 is modified to Phosphoserine. Residues 794-858 (WNVEDVYEFI…YARISMLKDS (65 aa)) form the SAM domain. K847 is covalently cross-linked (Glycyl lysine isopeptide (Lys-Gly) (interchain with G-Cter in SUMO2)).

Component of a PRC1-like complex. Interacts with CBX4. Interacts with BMI1, PCGF2, PHC1 and RNF2. Interacts with CHTOP. Interacts with the N-terminal region of the SP1 transcription factor and with MAPKAPK2. Interacts with SAMD7 and SAMD11.

It localises to the nucleus. Its function is as follows. Component of a Polycomb group (PcG) multiprotein PRC1-like complex, a complex class required to maintain the transcriptionally repressive state of many genes, including Hox genes, throughout development. PcG PRC1 complex acts via chromatin remodeling and modification of histones; it mediates monoubiquitination of histone H2A 'Lys-119', rendering chromatin heritably changed in its expressibility. The chain is Polyhomeotic-like protein 2 (PHC2) from Homo sapiens (Human).